A 225-amino-acid polypeptide reads, in one-letter code: Small ribosomal subunit protein uS3 (225 aa).

Residues 38-106 (LRAHLRRKLS…DVALNIVEIR (69 aa)) enclose the KH type-2 domain.

The protein belongs to the universal ribosomal protein uS3 family. In terms of assembly, part of the 30S ribosomal subunit. Forms a tight complex with proteins S10 and S14.

In terms of biological role, binds the lower part of the 30S subunit head. Binds mRNA in the 70S ribosome, positioning it for translation. The polypeptide is Small ribosomal subunit protein uS3 (Gluconacetobacter diazotrophicus (strain ATCC 49037 / DSM 5601 / CCUG 37298 / CIP 103539 / LMG 7603 / PAl5)).